We begin with the raw amino-acid sequence, 236 residues long: Ribose-5-phosphate isomerase (236 aa).

Residues 27–30 (TGST), 84–87 (DGTD), and 97–100 (KGRG) contribute to the substrate site. The active-site Proton acceptor is the Glu106. Residue Lys124 coordinates substrate.

The protein belongs to the ribose 5-phosphate isomerase family. As to quaternary structure, homodimer.

It catalyses the reaction aldehydo-D-ribose 5-phosphate = D-ribulose 5-phosphate. Its pathway is carbohydrate degradation; pentose phosphate pathway; D-ribose 5-phosphate from D-ribulose 5-phosphate (non-oxidative stage): step 1/1. Functionally, involved in the first step of the non-oxidative branch of the pentose phosphate pathway. It catalyzes the reversible conversion of ribose-5-phosphate to ribulose 5-phosphate. The polypeptide is Ribose-5-phosphate isomerase (Plasmodium falciparum (isolate 3D7)).